The chain runs to 144 residues: Ribosomally synthesized cyclic peptide phomopsin precursor phomA' (144 aa).

The N-terminal stretch at Met1–Ala18 is a signal peptide. Propeptides lie at residues Ala19–Asp35, Lys42–Asp50, Lys57–Asp65, Lys72–Asp79, Lys86–Asp94, Lys101–Asp108, Lys115–Asp123, Lys130–Asp137, and Lys144.

In terms of processing, phomA' is processed by several endopeptidases including kexin proteases as well as the cluster-specific S41 family peptidase phomP1' and the peptidase phomG' to produce 5 identical copies of the hexapeptide Tyr-Val-Ile-Pro-Ile-Asp and 3 identical copies of Tyr-Val-Ile-Pro-Phe-Asp, that are further modified into phomapsins A and P, respectively. The timing and order of proteolysis of the phomA' precursor and PTMs are still unknown. Two tyrosinase-like enzyme phomQ1' and PhomQ2, catalyze the chlorination and hydroxylation of Tyr, respectively. PhomYb', is proposed to be involved in the construction of the macrocyclic structure. The other four ustYa family proteins may be involved in PTMs that generate the unique structure of phomopsin A. PhomYa' is required for the hydroxylation of C-beta of Tyr. PhomYc', PhomYd', and PhomYe' are responsible for the biosynthesis of 2,3-dehydroisoleucine (dIle), 2,3-dehydroaspartic acid (dAsp), and 3,4-dehydroproline (dPro), respectively. While dIle formation by phomYc is indispensable for the installation of dAsp by phomYd, the order of the other PTMs have not been elucidated yet. Most of the biosynthetic enzymes likely have broad substrate specificity, and thus, there might be a metabolic grid from a precursor to phomopsin A. The enzyme(s) responsible for the biosynthesis of 3,4-dehydrovaline (dVal) have also not been identified yet. Finally, PhomM' acts as an S-adenosylmethionine-dependent alpha-N-methyltransferase that catalyzes two successive N-methylation reactions, converting N-desmethyl-phomopsin A to phomopsin A and phomopsin A further to an N,N-dimethylated congener called phomopsin E.

Its pathway is mycotoxin biosynthesis. In terms of biological role, ribosomally synthesized cyclic peptide phomopsin precursor; part of the gene cluster that mediates the biosynthesis of the phomopsins, a group of hexapeptide mycotoxins which infects lupins and causes lupinosis disease in livestock. The phomA' translated product contains a 5-fold repeated peptide embedding the hexapeptide Tyr-Val-Ile-Pro-Ile-Asp and a 3-fold repeated peptide embedding the hexapeptide Tyr-Val-Ile-Pro-Phe-Asp, that is converted into phomapsin A and phomapsin P, respectively. After being excised from the precursor peptide by kexin proteases, the core peptides are cyclized and modified post-translationally by enzymes encoded within the corresponding gene cluster. The polypeptide is Ribosomally synthesized cyclic peptide phomopsin precursor phomA' (Diaporthe leptostromiformis (Lupinosis disease fungus)).